Reading from the N-terminus, the 246-residue chain is Acetoacetate decarboxylase (246 aa).

K116 (schiff-base intermediate with acetoacetate) is an active-site residue.

Belongs to the ADC family.

The enzyme catalyses acetoacetate + H(+) = acetone + CO2. Functionally, catalyzes the conversion of acetoacetate to acetone and carbon dioxide. The protein is Acetoacetate decarboxylase of Bordetella avium (strain 197N).